The primary structure comprises 341 residues: Major capsid protein (341 aa).

Positions 109–129 (RRIILQNMKDEELAIAQVEEK) form a coiled coil.

This sequence belongs to the lambda phage major capsid protein family. Homomultimer.

It localises to the virion. The protein resides in the host cytoplasm. Assembles to form an icosahedral capsid with a T=7 symmetry. The icosahedral capsid is about 60 nm in diameter and composed of 415 major capsid proteins. The assembly is primed by the interaction between capsid assembly protease and portal dodecamer, and major capsid proteins assemble cooperatively to form the procapsid with the help of capsid scaffolding protein. Major capsid protein forms hexons and pentons of the icosahedron. Viral genomic DNA is packaged into the procapsid through the portal vertex. The packaging triggers a dramatic reconfiguration of the capsid shell. The protein is Major capsid protein of Escherichia coli (Bacteriophage N15).